The sequence spans 414 residues: Ferredoxin--NAD(P)(+) reductase fdr (414 aa).

D7–A38 lines the FAD pocket. K149 to E177 provides a ligand contact to NAD(+).

This sequence belongs to the FAD-dependent oxidoreductase family. In terms of assembly, monomer. Carbazole 1,9a-dioxygenase complex consists of a terminal oxygenase component CarAa, a ferredoxin reductase component fdr and a ferredoxin component CarAc. Requires FAD as cofactor.

It catalyses the reaction 2 reduced [2Fe-2S]-[ferredoxin] + NAD(+) + H(+) = 2 oxidized [2Fe-2S]-[ferredoxin] + NADH. The catalysed reaction is 2 reduced [2Fe-2S]-[ferredoxin] + NADP(+) + H(+) = 2 oxidized [2Fe-2S]-[ferredoxin] + NADPH. Functionally, part of the multicomponent carbazole 1,9a-dioxygenase (CARDO), that converts carbazole (CAR) into 2-aminobiphenyl-2,3-diol. This Sphingomonas sp protein is Ferredoxin--NAD(P)(+) reductase fdr (fdr).